Reading from the N-terminus, the 342-residue chain is Anthranilate phosphoribosyltransferase (342 aa).

Residues G81, 84-85, T89, 91-94, 109-117, and A121 each bind 5-phospho-alpha-D-ribose 1-diphosphate; these read GD, NVST, and KHGNRAASS. G81 contacts anthranilate. Position 93 (S93) interacts with Mg(2+). N112 is a binding site for anthranilate. R167 provides a ligand contact to anthranilate. The Mg(2+) site is built by D226 and E227.

Belongs to the anthranilate phosphoribosyltransferase family. As to quaternary structure, homodimer. The cofactor is Mg(2+).

The catalysed reaction is N-(5-phospho-beta-D-ribosyl)anthranilate + diphosphate = 5-phospho-alpha-D-ribose 1-diphosphate + anthranilate. It functions in the pathway amino-acid biosynthesis; L-tryptophan biosynthesis; L-tryptophan from chorismate: step 2/5. Its function is as follows. Catalyzes the transfer of the phosphoribosyl group of 5-phosphorylribose-1-pyrophosphate (PRPP) to anthranilate to yield N-(5'-phosphoribosyl)-anthranilate (PRA). This chain is Anthranilate phosphoribosyltransferase, found in Beijerinckia indica subsp. indica (strain ATCC 9039 / DSM 1715 / NCIMB 8712).